The primary structure comprises 357 residues: Thiamine thiazole synthase 3, chloroplastic (357 aa).

Residues 1 to 51 (MSISAAGVATGLGANVELKSNVGSSSSSVAGVRLFTSRKAQLRRCAAPATS) constitute a chloroplast transit peptide. Substrate-binding positions include alanine 103, 123 to 124 (EQ), glycine 131, and alanine 196. Cysteine 225 bears the 2,3-didehydroalanine (Cys) mark. Residues aspartate 227, histidine 242, methionine 294, and 304-306 (RMG) each bind substrate.

The protein belongs to the THI4 family. Homooctamer. Fe cation is required as a cofactor. In terms of processing, during the catalytic reaction, a sulfide is transferred from Cys-225 to a reaction intermediate, generating a dehydroalanine residue.

Its subcellular location is the plastid. It localises to the chloroplast. It carries out the reaction [ADP-thiazole synthase]-L-cysteine + glycine + NAD(+) = [ADP-thiazole synthase]-dehydroalanine + ADP-5-ethyl-4-methylthiazole-2-carboxylate + nicotinamide + 3 H2O + 2 H(+). Functionally, involved in biosynthesis of the thiamine precursor thiazole. Catalyzes the conversion of NAD and glycine to adenosine diphosphate 5-(2-hydroxyethyl)-4-methylthiazole-2-carboxylic acid (ADT), an adenylated thiazole intermediate. The reaction includes an iron-dependent sulfide transfer from a conserved cysteine residue of the protein to a thiazole intermediate. The enzyme can only undergo a single turnover, which suggests it is a suicide enzyme. May have additional roles in adaptation to various stress conditions and in DNA damage tolerance. This is Thiamine thiazole synthase 3, chloroplastic from Physcomitrium patens (Spreading-leaved earth moss).